The sequence spans 468 residues: 6-phospho-beta-galactosidase (468 aa).

Gln-19, His-116, Asn-159, Glu-160, and Asn-297 together coordinate D-galactose 6-phosphate. Glu-160 acts as the Proton donor in catalysis. Catalysis depends on Glu-375, which acts as the Nucleophile. D-galactose 6-phosphate-binding residues include Ser-428, Trp-429, Lys-435, and Tyr-437.

The protein belongs to the glycosyl hydrolase 1 family.

The enzyme catalyses a 6-phospho-beta-D-galactoside + H2O = D-galactose 6-phosphate + an alcohol. Its pathway is carbohydrate metabolism; lactose degradation; D-galactose 6-phosphate and beta-D-glucose from lactose 6-phosphate: step 1/1. The sequence is that of 6-phospho-beta-galactosidase from Streptococcus mutans serotype c (strain ATCC 700610 / UA159).